A 172-amino-acid polypeptide reads, in one-letter code: 3-phenylpropionate/cinnamic acid dioxygenase subunit beta (172 aa).

This sequence belongs to the bacterial ring-hydroxylating dioxygenase beta subunit family. This dioxygenase system consists of four proteins: the two subunits of the hydroxylase component (HcaE and HcaF), a ferredoxin (HcaC) and a ferredoxin reductase (HcaD).

The enzyme catalyses 3-phenylpropanoate + NADH + O2 + H(+) = 3-(cis-5,6-dihydroxycyclohexa-1,3-dien-1-yl)propanoate + NAD(+). It catalyses the reaction (E)-cinnamate + NADH + O2 + H(+) = (2E)-3-(cis-5,6-dihydroxycyclohexa-1,3-dien-1-yl)prop-2-enoate + NAD(+). The protein operates within aromatic compound metabolism; 3-phenylpropanoate degradation. In terms of biological role, part of the multicomponent 3-phenylpropionate dioxygenase. Converts 3-phenylpropionic acid (PP) and cinnamic acid (CI) into 3-phenylpropionate-dihydrodiol (PP-dihydrodiol) and cinnamic acid-dihydrodiol (CI-dihydrodiol), respectively. The chain is 3-phenylpropionate/cinnamic acid dioxygenase subunit beta from Escherichia coli O157:H7.